A 281-amino-acid chain; its full sequence is F-actin-capping protein subunit alpha (281 aa).

Belongs to the F-actin-capping protein alpha subunit family. Component of the F-actin capping complex, composed of a heterodimer of an alpha and a beta subunit.

It is found in the cytoplasm. Its subcellular location is the cytoskeleton. Its function is as follows. F-actin-capping proteins bind in a Ca(2+)-independent manner to the fast growing ends of actin filaments (barbed end) thereby blocking the exchange of subunits at these ends. Unlike other capping proteins (such as gelsolin and severin), these proteins do not sever actin filaments. This Dictyostelium discoideum (Social amoeba) protein is F-actin-capping protein subunit alpha (acpB).